A 355-amino-acid polypeptide reads, in one-letter code: Homeobox protein knotted-1-like 12 (355 aa).

2 disordered regions span residues 52–82 (AAGP…GGGE) and 207–233 (ECVG…PRAE). The segment covering 60–75 (GHGHPHHGGGHHHSKH) has biased composition (basic residues). Positions 218-233 (PSGRENEPPEIDPRAE) are enriched in basic and acidic residues. One can recognise an ELK domain in the interval 236–256 (ELKFQLLKKYSGYLSSLRQEF). Residues 257-320 (SKKKKKGKLP…NQRKRHWKPS (64 aa)) constitute a DNA-binding region (homeobox; TALE-type).

It belongs to the TALE/KNOX homeobox family. As to expression, expressed in stems, rachis and inflorescence.

Its subcellular location is the nucleus. Probable transcription factor that may be involved in shoot formation during embryogenesis. In Oryza sativa subsp. japonica (Rice), this protein is Homeobox protein knotted-1-like 12 (OSH15).